Consider the following 276-residue polypeptide: Pantothenate synthetase (276 aa).

26-33 (MGFLHAGH) lines the ATP pocket. The Proton donor role is filled by His-33. Gln-57 serves as a coordination point for (R)-pantoate. Gln-57 is a beta-alanine binding site. Residue 143–146 (GQKD) coordinates ATP. (R)-pantoate is bound at residue Gln-149. ATP-binding positions include Ile-172 and 180–183 (MSSR).

Belongs to the pantothenate synthetase family. Homodimer.

The protein resides in the cytoplasm. The catalysed reaction is (R)-pantoate + beta-alanine + ATP = (R)-pantothenate + AMP + diphosphate + H(+). It functions in the pathway cofactor biosynthesis; (R)-pantothenate biosynthesis; (R)-pantothenate from (R)-pantoate and beta-alanine: step 1/1. Catalyzes the condensation of pantoate with beta-alanine in an ATP-dependent reaction via a pantoyl-adenylate intermediate. The chain is Pantothenate synthetase from Herpetosiphon aurantiacus (strain ATCC 23779 / DSM 785 / 114-95).